Here is a 261-residue protein sequence, read N- to C-terminus: Cytochrome c oxidase subunit 3 (261 aa).

Residues 1–15 (MTHQTHAYHMVNPSP) are Mitochondrial matrix-facing. A helical transmembrane segment spans residues 16-34 (WPLTGALSALLMTSGLIMW). The Mitochondrial intermembrane segment spans residues 35–40 (FHFNST). The chain crosses the membrane as a helical span at residues 41-66 (ALLTLGLTTNMLTMYQWWRDVIREST). The Mitochondrial matrix segment spans residues 67 to 72 (FQGHHT). The helical transmembrane segment at 73–105 (PAVQKGLRYGMILFIISEVLFFTGFFWAFYHSS) threads the bilayer. At 106–128 (LAPTPELGGCWPPTGIHPLNPLE) the chain is on the mitochondrial intermembrane side. The chain crosses the membrane as a helical span at residues 129–152 (VPLLNTSVLLASGVSITWAHHSLM). Over 153 to 155 (EGN) the chain is Mitochondrial matrix. The chain crosses the membrane as a helical span at residues 156 to 183 (RYHMLQALFITIALGVYFTLLQASEYYE). At 184–190 (APFTISD) the chain is on the mitochondrial intermembrane side. The helical transmembrane segment at 191–223 (GVYGSTFFVATGFHGLHVIIGSTFLIVCFFRQL) threads the bilayer. Residues 224 to 232 (KFHFTSSHH) lie on the Mitochondrial matrix side of the membrane. Residues 233–256 (FGFEAAAWYWHFVDVVWLFLYMSI) form a helical membrane-spanning segment. Over 257–261 (YWWGS) the chain is Mitochondrial intermembrane.

The protein belongs to the cytochrome c oxidase subunit 3 family. Component of the cytochrome c oxidase (complex IV, CIV), a multisubunit enzyme composed of 14 subunits. The complex is composed of a catalytic core of 3 subunits MT-CO1, MT-CO2 and MT-CO3, encoded in the mitochondrial DNA, and 11 supernumerary subunits COX4I, COX5A, COX5B, COX6A, COX6B, COX6C, COX7A, COX7B, COX7C, COX8 and NDUFA4, which are encoded in the nuclear genome. The complex exists as a monomer or a dimer and forms supercomplexes (SCs) in the inner mitochondrial membrane with NADH-ubiquinone oxidoreductase (complex I, CI) and ubiquinol-cytochrome c oxidoreductase (cytochrome b-c1 complex, complex III, CIII), resulting in different assemblies (supercomplex SCI(1)III(2)IV(1) and megacomplex MCI(2)III(2)IV(2)).

The protein localises to the mitochondrion inner membrane. It carries out the reaction 4 Fe(II)-[cytochrome c] + O2 + 8 H(+)(in) = 4 Fe(III)-[cytochrome c] + 2 H2O + 4 H(+)(out). In terms of biological role, component of the cytochrome c oxidase, the last enzyme in the mitochondrial electron transport chain which drives oxidative phosphorylation. The respiratory chain contains 3 multisubunit complexes succinate dehydrogenase (complex II, CII), ubiquinol-cytochrome c oxidoreductase (cytochrome b-c1 complex, complex III, CIII) and cytochrome c oxidase (complex IV, CIV), that cooperate to transfer electrons derived from NADH and succinate to molecular oxygen, creating an electrochemical gradient over the inner membrane that drives transmembrane transport and the ATP synthase. Cytochrome c oxidase is the component of the respiratory chain that catalyzes the reduction of oxygen to water. Electrons originating from reduced cytochrome c in the intermembrane space (IMS) are transferred via the dinuclear copper A center (CU(A)) of subunit 2 and heme A of subunit 1 to the active site in subunit 1, a binuclear center (BNC) formed by heme A3 and copper B (CU(B)). The BNC reduces molecular oxygen to 2 water molecules using 4 electrons from cytochrome c in the IMS and 4 protons from the mitochondrial matrix. The sequence is that of Cytochrome c oxidase subunit 3 (MT-CO3) from Ovis aries (Sheep).